Consider the following 232-residue polypeptide: LRRN4 C-terminal-like protein (232 aa).

An N-terminal signal peptide occupies residues 1 to 22; the sequence is MPHSPCLLWLLAVTSLVPGTQP. At 23–189 the chain is on the extracellular side; it reads LVAGDLEGDE…RLTVPPRPLT (167 aa). One can recognise a Fibronectin type-III domain in the interval 77–172; sequence PPHPPRLGEV…GAEGLDSADG (96 aa). Asparagine 127 carries an N-linked (GlcNAc...) asparagine glycan. A helical membrane pass occupies residues 190-210; the sequence is LLHAAMGVGSALALLSCSALV. Residues 211–232 lie on the Cytoplasmic side of the membrane; that stretch reads WHFCLRQRWGCPRRGRPSHAGL.

It is found in the membrane. This chain is LRRN4 C-terminal-like protein (LRRN4CL), found in Bos taurus (Bovine).